The following is a 470-amino-acid chain: Macrophage metalloelastase (470 aa).

The N-terminal stretch at 1-16 (MKFLLILLLQATASGA) is a signal peptide. The propeptide at 17–105 (LPLNSSTSLE…DVHHFREMPG (89 aa)) is activation peptide. Asparagine 20 carries an N-linked (GlcNAc...) asparagine glycan. A Cysteine switch motif is present at residues 90 to 97 (PRCGVPDV). Cysteine 92 provides a ligand contact to Zn(2+). Residues aspartate 124 and aspartate 158 each contribute to the Ca(2+) site. The Zn(2+) site is built by histidine 168 and aspartate 170. Ca(2+) contacts are provided by aspartate 175, glycine 176, glycine 178, and isoleucine 180. A Zn(2+)-binding site is contributed by histidine 183. Ca(2+) contacts are provided by glycine 190, glycine 192, and aspartate 194. Residue histidine 196 participates in Zn(2+) binding. Ca(2+)-binding residues include aspartate 198, glutamate 199, and glutamate 201. Histidine 218 lines the Zn(2+) pocket. The active site involves glutamate 219. Residues histidine 222 and histidine 228 each coordinate Zn(2+). Hemopexin repeat units lie at residues 279–328 (PALC…WPTL), 329–375 (PSGI…GFPN), 377–425 (VKKI…FQGI), and 426–470 (GPKI…WFGC). Residues cysteine 282 and cysteine 470 are joined by a disulfide bond. An N-linked (GlcNAc...) asparagine glycan is attached at asparagine 285. The Ca(2+) site is built by aspartate 289, glutamate 333, aspartate 381, and aspartate 430.

The protein belongs to the peptidase M10A family. Requires Ca(2+) as cofactor. Zn(2+) serves as cofactor. Found in alveolar macrophages but not in peripheral blood monocytes.

Its subcellular location is the secreted. The protein localises to the extracellular space. It localises to the extracellular matrix. The enzyme catalyses Hydrolysis of soluble and insoluble elastin. Specific cleavages are also produced at 14-Ala-|-Leu-15 and 16-Tyr-|-Leu-17 in the B chain of insulin.. In terms of biological role, may be involved in tissue injury and remodeling. Has significant elastolytic activity. Can accept large and small amino acids at the P1' site, but has a preference for leucine. Aromatic or hydrophobic residues are preferred at the P1 site, with small hydrophobic residues (preferably alanine) occupying P3. This Homo sapiens (Human) protein is Macrophage metalloelastase (MMP12).